The primary structure comprises 115 residues: NADH-ubiquinone oxidoreductase chain 3 (115 aa).

Transmembrane regions (helical) follow at residues 4-24 (LITM…AFWL), 55-75 (FFLV…LLPL), and 87-107 (TMMV…YEWL).

This sequence belongs to the complex I subunit 3 family. As to quaternary structure, core subunit of respiratory chain NADH dehydrogenase (Complex I) which is composed of 45 different subunits. Interacts with TMEM186. Interacts with TMEM242.

It localises to the mitochondrion inner membrane. It catalyses the reaction a ubiquinone + NADH + 5 H(+)(in) = a ubiquinol + NAD(+) + 4 H(+)(out). Core subunit of the mitochondrial membrane respiratory chain NADH dehydrogenase (Complex I) which catalyzes electron transfer from NADH through the respiratory chain, using ubiquinone as an electron acceptor. Essential for the catalytic activity of complex I. This Notiomys edwardsii (Edwards's long-clawed mouse) protein is NADH-ubiquinone oxidoreductase chain 3.